Reading from the N-terminus, the 342-residue chain is tRNA N6-adenosine threonylcarbamoyltransferase (342 aa).

Residues histidine 120 and histidine 124 each coordinate Fe cation. Residues 142–146, aspartate 175, glycine 188, aspartate 192, and asparagine 281 each bind substrate; that span reads VVSGG. Aspartate 310 provides a ligand contact to Fe cation.

Belongs to the KAE1 / TsaD family. The cofactor is Fe(2+).

Its subcellular location is the cytoplasm. The enzyme catalyses L-threonylcarbamoyladenylate + adenosine(37) in tRNA = N(6)-L-threonylcarbamoyladenosine(37) in tRNA + AMP + H(+). Required for the formation of a threonylcarbamoyl group on adenosine at position 37 (t(6)A37) in tRNAs that read codons beginning with adenine. Is involved in the transfer of the threonylcarbamoyl moiety of threonylcarbamoyl-AMP (TC-AMP) to the N6 group of A37, together with TsaE and TsaB. TsaD likely plays a direct catalytic role in this reaction. The sequence is that of tRNA N6-adenosine threonylcarbamoyltransferase from Geobacillus kaustophilus (strain HTA426).